The following is a 218-amino-acid chain: Cold-regulated protein 28 (218 aa).

Disordered stretches follow at residues methionine 1–lysine 51 and threonine 166–threonine 218. Positions glutamate 20–serine 37 are enriched in low complexity. The span at glycine 186–glutamine 207 shows a compositional bias: basic and acidic residues.

It is found in the nucleus. Its function is as follows. Together with COR27, involved in central circadian clock regulation and in flowering promotion, by binding to the chromatin of clock-associated evening genes TOC1, PRR5, ELF4 and cold-responsive genes in order to repress their transcription. Negative regulator of freezing tolerance. The protein is Cold-regulated protein 28 of Arabidopsis thaliana (Mouse-ear cress).